A 367-amino-acid chain; its full sequence is Developmentally-regulated GTP-binding protein 1 (367 aa).

Residues 2–16 (SGTLARIAEIEAEMA) are required for interaction with STK16. Residues 65 to 290 (ARIGFVGFPS…LLEKIWDYLQ (226 aa)) form the OBG-type G domain. Residues 71–78 (GFPSVGKS), 96–100 (FTTLT), 117–120 (DLPG), 248–251 (NKID), and 271–273 (SAH) contribute to the GTP site. Positions 78 and 98 each coordinate Mg(2+). Residues 290–366 (QLVRIYTKPK…EDEDVIQIVK (77 aa)) enclose the TGS domain.

Belongs to the TRAFAC class OBG-HflX-like GTPase superfamily. OBG GTPase family. The cofactor is Mg(2+). It depends on K(+) as a cofactor. Expressed in many adult amd embryonic tissues. In adults, highest levels in ovaries and testes, followed by skeletal muscle, stomach, brain, kidney and liver. Weak expression in heart and brain.

The protein localises to the nucleus. The protein resides in the cytoplasm. It catalyses the reaction GTP + H2O = GDP + phosphate + H(+). In terms of biological role, catalyzes the conversion of GTP to GDP through hydrolysis of the gamma-phosphate bond in GTP. Binds to microtubules and promotes microtubule polymerization and bundling. GTPase activity is not necessary for these microtubule-related functions. This is Developmentally-regulated GTP-binding protein 1 (drg1) from Xenopus laevis (African clawed frog).